Reading from the N-terminus, the 872-residue chain is Alanine--tRNA ligase (872 aa).

Zn(2+)-binding residues include His567, His571, Cys669, and His673.

The protein belongs to the class-II aminoacyl-tRNA synthetase family. It depends on Zn(2+) as a cofactor.

It is found in the cytoplasm. The catalysed reaction is tRNA(Ala) + L-alanine + ATP = L-alanyl-tRNA(Ala) + AMP + diphosphate. Catalyzes the attachment of alanine to tRNA(Ala) in a two-step reaction: alanine is first activated by ATP to form Ala-AMP and then transferred to the acceptor end of tRNA(Ala). Also edits incorrectly charged Ser-tRNA(Ala) and Gly-tRNA(Ala) via its editing domain. This chain is Alanine--tRNA ligase, found in Streptococcus pyogenes serotype M1.